Here is a 427-residue protein sequence, read N- to C-terminus: cAMP-dependent protein kinase regulatory subunit (427 aa).

A dimerization and phosphorylation region spans residues 38-184; the sequence is QFCSNFFIRK…RIKVSISNNF (147 aa). The disordered stretch occupies residues 96–145; that stretch reads TTHMGHPNDHGALHDDDDDPLEDEDDEEFDKFSTEPLPSLPPTNYNRGRR. The segment covering 110–124 has biased composition (acidic residues); it reads DDDDDPLEDEDDEEF. Serine 147 is subject to Phosphoserine. 3',5'-cyclic AMP contacts are provided by residues 185 to 300, glutamate 250, arginine 259, 303 to 422, glutamate 372, and arginine 381; these read LFRN…FLSE and LLKS…YHAV.

The protein belongs to the cAMP-dependent kinase regulatory chain family. Tetramer, composed of 2 regulatory (R) and 2 catalytic (C) subunits. In the presence of cAMP it dissociates into 2 active monomeric C subunits and an R dimer.

This is cAMP-dependent protein kinase regulatory subunit (pkar) from Mucor circinelloides f. lusitanicus (Mucor racemosus var. lusitanicus).